A 786-amino-acid polypeptide reads, in one-letter code: Sucrose synthase (786 aa).

Residues 259–736 (MIFSLVVLSP…ALKRVEERYN (478 aa)) are GT-B glycosyltransferase.

The protein belongs to the glycosyltransferase 1 family. In terms of assembly, homotetramer.

It catalyses the reaction an NDP-alpha-D-glucose + D-fructose = a ribonucleoside 5'-diphosphate + sucrose + H(+). Its function is as follows. Catalyzes the reversible conversion of sucrose and a nucleotide disphosphate (NDP) into fructose and NDP-glucose; although the reaction is freely reversible in vitro, the physiological reaction seems to be sucrose cleavage. Unlike characterized plant enzymes prefers ADP as a cosubstrate, whereas plants prefer UDP. Its preference for ADP over UDP suggests it may directly link sucrose and glycogen metabolism. The polypeptide is Sucrose synthase (Denitrovibrio acetiphilus (strain DSM 12809 / NBRC 114555 / N2460)).